The primary structure comprises 199 residues: NAD(P)H dehydrogenase (quinone) (199 aa).

Residues 4–190 (VLVLYYSAYG…NGARYQGRTI (187 aa)) form the Flavodoxin-like domain. Residues 10-15 (SAYGHI) and 78-80 (TRF) contribute to the FMN site. Residue tyrosine 12 participates in NAD(+) binding. Tryptophan 98 lines the substrate pocket. FMN is bound by residues 113-119 (STATQHG) and histidine 134.

This sequence belongs to the WrbA family. It depends on FMN as a cofactor.

The enzyme catalyses a quinone + NADH + H(+) = a quinol + NAD(+). The catalysed reaction is a quinone + NADPH + H(+) = a quinol + NADP(+). The chain is NAD(P)H dehydrogenase (quinone) from Afipia carboxidovorans (strain ATCC 49405 / DSM 1227 / KCTC 32145 / OM5) (Oligotropha carboxidovorans).